Consider the following 188-residue polypeptide: GTPase KRas (188 aa).

Residue M1 is modified to N-acetylmethionine. T2 carries the post-translational modification N-acetylthreonine; in GTPase KRas, N-terminally processed. Residues 10 to 18 (GAGGVGKSA), 29 to 35 (VDEYDPT), and 59 to 60 (AG) contribute to the GTP site. The short motif at 32–40 (YDPTIEDSY) is the Effector region element. K104 is subject to N6-acetyllysine. 116–119 (NKCD) contributes to the GTP binding site. The tract at residues 166-185 (HKEKMSKDGKKKKKKSKTKC) is hypervariable region. A disordered region spans residues 167-188 (KEKMSKDGKKKKKKSKTKCIIM). Cysteine methyl ester is present on C185. A lipid anchor (S-farnesyl cysteine) is attached at C185. A propeptide spans 186–188 (IIM) (removed in mature form).

Belongs to the small GTPase superfamily. Ras family. As to quaternary structure, interacts with PHLPP. Interacts (active GTP-bound form preferentially) with RGS14. Interacts (when farnesylated) with PDE6D; this promotes dissociation from the cell membrane. Interacts with SOS1. Interacts (when farnesylated) with GPR31. Interacts with RAP1GDS1. Interacts (active GTP-bound form) with both SHOC2 and PP1c (all isoforms) to form a tertiary complex; SHOC2 and PP1c preferably bind M-Ras/MRAS, but they also bind K-Ras/KRAS, N-Ras/NRAS and H-Ras/HRAS. Interacts (GTP-bound form) with MAPKAP1/SIN1; inhibiting K-Ras/KRAS activity. Post-translationally, acetylation at Lys-104 prevents interaction with guanine nucleotide exchange factors (GEFs).

The protein localises to the cell membrane. The protein resides in the cytoplasm. Its subcellular location is the cytosol. It carries out the reaction GTP + H2O = GDP + phosphate + H(+). Alternates between an inactive form bound to GDP and an active form bound to GTP. Activated by a guanine nucleotide-exchange factor (GEF) and inactivated by a GTPase-activating protein (GAP). Interaction with SOS1 promotes exchange of bound GDP to GTP. Functionally, ras proteins bind GDP/GTP and possess intrinsic GTPase activity. Plays an important role in the regulation of cell proliferation. Plays a role in promoting oncogenic events by inducing transcriptional silencing of tumor suppressor genes (TSGs) in colorectal cancer (CRC) cells in a ZNF304-dependent manner. This chain is GTPase KRas (KRAS), found in Monodelphis domestica (Gray short-tailed opossum).